The primary structure comprises 69 residues: Putative antitoxin AF_1481 (69 aa).

It belongs to the UPF0330 family.

Its function is as follows. Possibly the antitoxin component of a type II toxin-antitoxin (TA) system. This Archaeoglobus fulgidus (strain ATCC 49558 / DSM 4304 / JCM 9628 / NBRC 100126 / VC-16) protein is Putative antitoxin AF_1481.